Reading from the N-terminus, the 98-residue chain is UPF0213 protein in ldhD 5'region (98 aa).

The region spanning 7–84 (NGFYFYVLWC…KKQSRKEKLK (78 aa)) is the GIY-YIG domain.

It belongs to the UPF0213 family.

The sequence is that of UPF0213 protein in ldhD 5'region from Pediococcus acidilactici.